We begin with the raw amino-acid sequence, 466 residues long: Citrate synthase, mitochondrial (466 aa).

The transit peptide at 1 to 27 (MALLTAAARLLGAKNSSCLVLAARHAS) directs the protein to the mitochondrion. The SIFI-degron motif lies at 2-21 (ALLTAAARLLGAKNSSCLVL). N6-succinyllysine is present on K57. K76 carries the N6-acetyllysine; alternate modification. Residue K76 is modified to N6-succinyllysine; alternate. 2 positions are modified to N6-succinyllysine: K103 and K193. Residue S226 is modified to Phosphoserine. H301 is a catalytic residue. N6-acetyllysine; alternate occurs at positions 321 and 327. An N6-succinyllysine; alternate mark is found at K321 and K327. The active site involves H347. Position 356 (R356) interacts with oxaloacetate. N6-acetyllysine; alternate is present on K375. K375 is subject to N6-succinyllysine; alternate. N6-acetyllysine is present on K382. K393 is modified (N6-acetyllysine; alternate). K393 bears the N6-succinyllysine; alternate mark. K395 is subject to N6,N6,N6-trimethyllysine. The active site involves D402. Residues R428 and R448 each coordinate oxaloacetate. K450 is modified (N6-succinyllysine). An N6-acetyllysine; alternate modification is found at K459. At K459 the chain carries N6-succinyllysine; alternate.

This sequence belongs to the citrate synthase family. In terms of assembly, homodimer. In terms of processing, methylated. Trimethylation at Lys-395 by CSKMT decreases citrate synthase activity. Post-translationally, in response to mitochondrial stress, the precursor protein is ubiquitinated by the SIFI complex in the cytoplasm before mitochondrial import, leading to its degradation. Within the SIFI complex, UBR4 initiates ubiquitin chain that are further elongated or branched by KCMF1. Expressed in the head region and flagellum of epididymal sperm.

The protein localises to the mitochondrion matrix. It catalyses the reaction oxaloacetate + acetyl-CoA + H2O = citrate + CoA + H(+). The protein operates within carbohydrate metabolism; tricarboxylic acid cycle; isocitrate from oxaloacetate: step 1/2. In terms of biological role, key enzyme of the Krebs tricarboxylic acid cycle which catalyzes the synthesis of citrate from acetyl coenzyme A and oxaloacetate. The polypeptide is Citrate synthase, mitochondrial (Cs) (Rattus norvegicus (Rat)).